The primary structure comprises 424 residues: Anaerobic glycerol-3-phosphate dehydrogenase subunit B (424 aa).

Belongs to the anaerobic G-3-P dehydrogenase subunit B family. In terms of assembly, composed of a catalytic GlpA/B dimer and of membrane bound GlpC. The cofactor is FMN.

It catalyses the reaction a quinone + sn-glycerol 3-phosphate = dihydroxyacetone phosphate + a quinol. The protein operates within polyol metabolism; glycerol degradation via glycerol kinase pathway; glycerone phosphate from sn-glycerol 3-phosphate (anaerobic route): step 1/1. Its function is as follows. Conversion of glycerol 3-phosphate to dihydroxyacetone. Uses fumarate or nitrate as electron acceptor. The sequence is that of Anaerobic glycerol-3-phosphate dehydrogenase subunit B from Yersinia pseudotuberculosis serotype I (strain IP32953).